A 396-amino-acid chain; its full sequence is Acetate kinase (396 aa).

Asn-8 contacts Mg(2+). ATP is bound at residue Lys-15. Arg-89 serves as a coordination point for substrate. The Proton donor/acceptor role is filled by Asp-146. Residues 206–210 (HLGNG), 280–282 (DMR), and 328–332 (GVGEN) each bind ATP. Glu-382 is a binding site for Mg(2+).

Belongs to the acetokinase family. As to quaternary structure, homodimer. The cofactor is Mg(2+). Requires Mn(2+) as cofactor.

It localises to the cytoplasm. The enzyme catalyses acetate + ATP = acetyl phosphate + ADP. Its pathway is metabolic intermediate biosynthesis; acetyl-CoA biosynthesis; acetyl-CoA from acetate: step 1/2. Catalyzes the formation of acetyl phosphate from acetate and ATP. Can also catalyze the reverse reaction. The chain is Acetate kinase from Clavibacter michiganensis subsp. michiganensis (strain NCPPB 382).